We begin with the raw amino-acid sequence, 263 residues long: Trans-aconitate 2-methyltransferase (263 aa).

This sequence belongs to the methyltransferase superfamily. Tam family.

It is found in the cytoplasm. It carries out the reaction trans-aconitate + S-adenosyl-L-methionine = (E)-3-(methoxycarbonyl)pent-2-enedioate + S-adenosyl-L-homocysteine. Catalyzes the S-adenosylmethionine monomethyl esterification of trans-aconitate. This Mycobacterium marinum (strain ATCC BAA-535 / M) protein is Trans-aconitate 2-methyltransferase.